Reading from the N-terminus, the 191-residue chain is 3-isopropylmalate dehydratase small subunit (191 aa).

The protein belongs to the LeuD family. LeuD type 1 subfamily. As to quaternary structure, heterodimer of LeuC and LeuD.

It carries out the reaction (2R,3S)-3-isopropylmalate = (2S)-2-isopropylmalate. Its pathway is amino-acid biosynthesis; L-leucine biosynthesis; L-leucine from 3-methyl-2-oxobutanoate: step 2/4. Its function is as follows. Catalyzes the isomerization between 2-isopropylmalate and 3-isopropylmalate, via the formation of 2-isopropylmaleate. The polypeptide is 3-isopropylmalate dehydratase small subunit (Anaeromyxobacter dehalogenans (strain 2CP-C)).